Consider the following 1380-residue polypeptide: Hepatocyte growth factor receptor (1380 aa).

Residues 1–24 form the signal peptide; sequence MKAPAALAPGILVLLLTLVQKGGG. At 25 to 931 the chain is on the extracellular side; that stretch reads ECREALAKSE…VIVQPDQNFT (907 aa). The 487-residue stretch at 27 to 513 folds into the Sema domain; that stretch reads REALAKSEMN…TGKKITKIPL (487 aa). Asn-45 is a glycosylation site (N-linked (GlcNAc...) asparagine). 4 disulfides stabilise this stretch: Cys-95-Cys-101, Cys-98-Cys-156, Cys-129-Cys-137, and Cys-170-Cys-173. N-linked (GlcNAc...) asparagine glycosylation occurs at Asn-200. 2 disulfides stabilise this stretch: Cys-296–Cys-361 and Cys-383–Cys-395. N-linked (GlcNAc...) asparagine glycans are attached at residues Asn-397 and Asn-403. Intrachain disulfides connect Cys-518-Cys-536, Cys-524-Cys-559, Cys-527-Cys-543, and Cys-539-Cys-549. N-linked (GlcNAc...) asparagine glycosylation occurs at Asn-551. IPT/TIG domains lie at 561–654, 656–738, and 741–835; these read PTIY…FSYV, PEIT…FSYQ, and PLVV…LIYV. Thr-580 carries O-linked (Man) threonine glycosylation. N-linked (GlcNAc...) asparagine glycosylation is found at Asn-592, Asn-605, and Asn-633. 2 O-linked (Man) threonine glycosylation sites follow: Thr-675 and Thr-760. 3 N-linked (GlcNAc...) asparagine glycosylation sites follow: Asn-784, Asn-878, and Asn-929. A helical membrane pass occupies residues 932 to 954; it reads GLIVGVVSISVILLSSLGLFLWL. Residues 955–1380 are Cytoplasmic-facing; sequence KKRKQIKDLG…HDTVDGEVDT (426 aa). Phosphoserine is present on Ser-965. Residue Thr-976 is modified to Phosphothreonine. 3 positions are modified to phosphoserine: Ser-989, Ser-996, and Ser-999. Tyr-1002 carries the post-translational modification Phosphotyrosine. In terms of domain architecture, Protein kinase spans 1077-1344; sequence VHFNEVIGRG…RISAIFSTFI (268 aa). ATP contacts are provided by residues 1083–1091 and Lys-1109; that span reads IGRGHFGCV. Catalysis depends on Asp-1203, which acts as the Proton acceptor. The interval 1211–1380 is interaction with RANBP9; the sequence is LDGKFTVKVA…HDTVDGEVDT (170 aa). Tyr-1229 is modified (phosphotyrosine). 2 positions are modified to phosphotyrosine; by autocatalysis: Tyr-1233 and Tyr-1234. Thr-1288 carries the post-translational modification Phosphothreonine. Residues 1319-1358 are interaction with MUC20; it reads WHPKAEMRPSFTELVSRISAIFSTFIGEHYVHVNATYVNV. Tyr-1348 and Tyr-1355 each carry phosphotyrosine; by autocatalysis. Tyr-1364 is subject to Phosphotyrosine.

Belongs to the protein kinase superfamily. Tyr protein kinase family. In terms of assembly, heterodimer made of an alpha chain (50 kDa) and a beta chain (145 kDa) which are disulfide linked. Binds PLXNB1. Interacts when phosphorylated with downstream effectors including STAT3, PIK3R1, SRC, PCLG1, GRB2 and GAB1. Interacts with SPSB1, SPSB2 and SPSB4. Interacts with INPP5D/SHIP1. When phosphorylated at Tyr-1355, interacts with INPPL1/SHIP2. Interacts with RANBP9 and RANBP10, as well as SPSB1, SPSB2, SPSB3 and SPSB4. SPSB1 binding occurs in the presence and in the absence of HGF, however HGF treatment has a positive effect on this interaction. Interacts with MUC20; prevents interaction with GRB2 and suppresses hepatocyte growth factor-induced cell proliferation. Interacts with GRB10. Interacts with PTPN1 and PTPN2. Interacts with HSP90AA1 and HSP90AB1; the interaction suppresses MET kinase activity. Interacts with tensin TNS3. Interacts (when phosphorylated) with tensin TNS4 (via SH2 domain); the interaction increases MET protein stability by inhibiting MET endocytosis and subsequent lysosomal degradation. Autophosphorylated in response to ligand binding on Tyr-1233 and Tyr-1234 in the kinase domain leading to further phosphorylation of Tyr-1348 and Tyr-1355 in the C-terminal multifunctional docking site. Dephosphorylated by PTPRJ at Tyr-1348 and Tyr-1364. Dephosphorylated by PTPN1 and PTPN2. In terms of processing, ubiquitinated. Ubiquitination by CBL regulates the receptor stability and activity through proteasomal degradation. Post-translationally, O-mannosylation of IPT/TIG domains by TMEM260 is required for protein maturation. O-mannosylated residues are composed of single mannose glycans that are not elongated or modified.

The protein localises to the membrane. It catalyses the reaction L-tyrosyl-[protein] + ATP = O-phospho-L-tyrosyl-[protein] + ADP + H(+). Its activity is regulated as follows. In its inactive state, the C-terminal tail interacts with the catalytic domain and inhibits the kinase activity. Upon ligand binding, the C-terminal tail is displaced and becomes phosphorylated, thus increasing the kinase activity. Its function is as follows. Receptor tyrosine kinase that transduces signals from the extracellular matrix into the cytoplasm by binding to hepatocyte growth factor/HGF ligand. Regulates many physiological processes including proliferation, scattering, morphogenesis and survival. Ligand binding at the cell surface induces autophosphorylation of MET on its intracellular domain that provides docking sites for downstream signaling molecules. Following activation by ligand, interacts with the PI3-kinase subunit PIK3R1, PLCG1, SRC, GRB2, STAT3 or the adapter GAB1. Recruitment of these downstream effectors by MET leads to the activation of several signaling cascades including the RAS-ERK, PI3 kinase-AKT, or PLCgamma-PKC. The RAS-ERK activation is associated with the morphogenetic effects while PI3K/AKT coordinates prosurvival effects. During embryonic development, MET signaling plays a role in gastrulation, development and migration of muscles and neuronal precursors, angiogenesis and kidney formation. In adults, participates in wound healing as well as organ regeneration and tissue remodeling. Also promotes differentiation and proliferation of hematopoietic cells. In Echinops telfairi (Lesser hedgehog tenrec), this protein is Hepatocyte growth factor receptor (MET).